A 342-amino-acid polypeptide reads, in one-letter code: MTTITITRPDDWHVHLRDGDVLKDTVRDISRYMGRAIIMPNLIPPVIDTESALSYRERIIAQGPQGNFSPLMVIYLTDNTSAEEIHKAKASGHVYAAKLYPAGATTNSDSGVTSIDHIRPALQAMQEAGMQLLIHGEVTAHDIDIFDREKVFLETVLAPIVEQFPNLRMVLEHITTADAVEFVTNAGPNVGATITAHHLMFNRNHMLVGGIRPHFYCLPILKRNIHQDALVKAATSGNPKFFLGTDSAPHAQGRKESACGCAGSYTAHAAIELYAEVFEAADALDKLEAFSSFNGPDFYNLPRNTDTITLKKESWNVPETMAFGGDEVVPIRAGEAMLWKVI.

Positions 13 and 15 each coordinate Zn(2+). Substrate is bound by residues His-15–Arg-17 and Asn-41. Residues Lys-98, His-135, and His-173 each coordinate Zn(2+). Position 98 is an N6-carboxylysine (Lys-98). His-135 provides a ligand contact to substrate. Leu-218 contributes to the substrate binding site. Asp-246 lines the Zn(2+) pocket. Residue Asp-246 is part of the active site. 2 residues coordinate substrate: His-250 and Ala-262.

Belongs to the metallo-dependent hydrolases superfamily. DHOase family. Class II DHOase subfamily. In terms of assembly, homodimer. The cofactor is Zn(2+).

It catalyses the reaction (S)-dihydroorotate + H2O = N-carbamoyl-L-aspartate + H(+). Its pathway is pyrimidine metabolism; UMP biosynthesis via de novo pathway; (S)-dihydroorotate from bicarbonate: step 3/3. In terms of biological role, catalyzes the reversible cyclization of carbamoyl aspartate to dihydroorotate. The chain is Dihydroorotase from Photobacterium profundum (strain SS9).